We begin with the raw amino-acid sequence, 486 residues long: G2/mitotic-specific cyclin-4 (486 aa).

2 disordered regions span residues 1-80 (MRSY…SSNK) and 105-126 (VLLN…DKEN). A compositionally biased stretch (polar residues) spans 25-41 (ANLSSNHTTAGQPSTSS). A compositionally biased stretch (acidic residues) spans 108-123 (NDDDDETDDEFDDEED). Residues 122 to 184 (EDKENRYHDL…QSHTQDMRSI (63 aa)) adopt a coiled-coil conformation. The Cyclin N-terminal domain maps to 234 to 359 (EIFNYLHELE…FMIDVLEFDL (126 aa)).

It belongs to the cyclin family. Cyclin AB subfamily. In terms of assembly, interacts with IQG1.

2/mitotic-specific cyclin essential for the control of the cell cycle at the G2/M (mitosis) transition. G2/M cyclins accumulate steadily during G2 and are abruptly destroyed at mitosis. Degradation is necessary for the cell to exit from mitosis. Plays a role in morphogenesis by negatively regulating polarized growth. Through binding to CDC28 regulates cytokinesis, partly by phosphorylation of the actomyosin ring component IQG1. In Candida albicans (strain SC5314 / ATCC MYA-2876) (Yeast), this protein is G2/mitotic-specific cyclin-4 (CLB4).